The sequence spans 36 residues: Photosystem I reaction center subunit VIII (36 aa).

Residues 8–28 (SVLVPLVGLIFPAMAMASLFL) traverse the membrane as a helical segment.

Belongs to the PsaI family.

The protein localises to the plastid. The protein resides in the chloroplast thylakoid membrane. Its function is as follows. May help in the organization of the PsaL subunit. This Daucus carota (Wild carrot) protein is Photosystem I reaction center subunit VIII.